A 256-amino-acid polypeptide reads, in one-letter code: uncharacterized protein (256 aa).

Transmembrane regions (helical) follow at residues 155–175 (ITGMLAAYAVLQAVEGVGLWL) and 203–223 (ITTTRVVTFSINVAAVVYLLI).

The protein resides in the cell membrane. This is an uncharacterized protein from Mycobacterium bovis (strain ATCC BAA-935 / AF2122/97).